The sequence spans 24 residues: Superoxide dismutase [Cu-Zn] (24 aa).

It belongs to the Cu-Zn superoxide dismutase family. As to quaternary structure, homodimer. Cu cation is required as a cofactor. Requires Zn(2+) as cofactor.

Its subcellular location is the cytoplasm. It catalyses the reaction 2 superoxide + 2 H(+) = H2O2 + O2. In terms of biological role, destroys radicals which are normally produced within the cells and which are toxic to biological systems. This Aquarana catesbeiana (American bullfrog) protein is Superoxide dismutase [Cu-Zn] (sod1).